Here is a 247-residue protein sequence, read N- to C-terminus: MIFNPLEQFRISVLQKLFFGNIDISITNNTIILFVILIGFTFLFYVNYSTNTYIPSKWQYAVENIYLFVLQLFKQQINNIVALKYFPLVLFVFSFILFANLIGLLPYGFTITGHIIFTFQIAFSLFFGITLINFFNNKTEFFNLFVPSGVPKPLIPFLVVIEVVSYLIRPFSLSVRLFANMLAGHTLLNILSAFIFNVFKKYALISFLPLLFIVFIIVLEFCIAIVQAYIFSILTCIYLNDIYNTSH.

6 helical membrane-spanning segments follow: residues 26 to 46, 85 to 105, 115 to 135, 141 to 161, 178 to 198, and 205 to 225; these read ITNN…LFYV, YFPL…IGLL, IIFT…INFF, FFNL…LVVI, FANM…IFNV, and ISFL…CIAI.

This sequence belongs to the ATPase A chain family. As to quaternary structure, F-type ATPases have 2 components, CF(1) - the catalytic core - and CF(0) - the membrane proton channel. CF(1) has five subunits: alpha(3), beta(3), gamma(1), delta(1), epsilon(1). CF(0) has three main subunits: a, b and c.

The protein resides in the mitochondrion inner membrane. Mitochondrial membrane ATP synthase (F(1)F(0) ATP synthase or Complex V) produces ATP from ADP in the presence of a proton gradient across the membrane which is generated by electron transport complexes of the respiratory chain. F-type ATPases consist of two structural domains, F(1) - containing the extramembraneous catalytic core and F(0) - containing the membrane proton channel, linked together by a central stalk and a peripheral stalk. During catalysis, ATP synthesis in the catalytic domain of F(1) is coupled via a rotary mechanism of the central stalk subunits to proton translocation. Key component of the proton channel; it may play a direct role in the translocation of protons across the membrane. The protein is ATP synthase subunit a (ATP6) of Acanthamoeba castellanii (Amoeba).